The following is a 451-amino-acid chain: Tubulin gamma-1 chain (451 aa).

The residue at position 131 (Ser-131) is a Phosphoserine; by BRSK1. 142-148 (AGGTGSG) serves as a coordination point for GTP.

Belongs to the tubulin family. Component of the gamma-tubulin ring complex (gTuRC) consisting of TUBGCP2, TUBGCP3, TUBGCP4, TUBGCP5 and TUBGCP6 and gamma-tubulin TUBG1 or TUBG2. TUBGCP2, TUBGCP3, TUBGCP4, TUBGCP5 and TUBGCP6 assemble in a 5:5:2:1:1 stoichiometry; each is associated with a gamma-tubulin, thereby arranging 14 gamma-tubulins in a helical manner. Gamma-tubulin at the first position is blocked by TUBGCP3 at the last position, allowing 13 protafilaments to grow into a microtubule. The gTuRC (via TUBGCP3 and TUBGCP6) interacts with ACTB and MZT1; the interactions form a luminal bridge that stabilizes the initial structure during complex assembly. The gTuRC (via TUBGCP2) interacts with MZT2A/MZT2B and CDK5RAP2 (via CM1 motif); the interactions play a role in gTuRC activation. Interacts with alpha-beta tubulin heterodimers; the interaction allows microtubules to nucleate from the gTuRC. Interacts with B9D2. Interacts with CDK5RAP2; the interaction is leading to centrosomal localization of TUBG1 and CDK5RAP2. Interacts with CIMAP3. Interacts with SAS6 and NUP62 at the centrosome. Interacts with EML3 (phosphorylated at 'Thr-881') and HAUS8. Interacts with DNM2; this interaction may participate in centrosome cohesion. Interacts with CCDC66. Phosphorylation at Ser-131 by BRSK1 regulates centrosome duplication, possibly by mediating relocation of gamma-tubulin and its associated proteins from the cytoplasm to the centrosome.

It localises to the cytoplasm. The protein resides in the cytoskeleton. Its subcellular location is the microtubule organizing center. The protein localises to the centrosome. It is found in the spindle. Functionally, tubulin is the major constituent of microtubules, protein filaments consisting of alpha- and beta-tubulin heterodimers. Gamma-tubulin is a key component of the gamma-tubulin ring complex (gTuRC) which mediates microtubule nucleation. The gTuRC regulates the minus-end nucleation of alpha-beta tubulin heterodimers that grow into microtubule protafilaments, a critical step in centrosome duplication and spindle formation. This Homo sapiens (Human) protein is Tubulin gamma-1 chain.